A 356-amino-acid polypeptide reads, in one-letter code: DNA polymerase IV (356 aa).

The UmuC domain maps to 7-188; the sequence is IIHIDMDAFY…IPVTKFYGVG (182 aa). Asp11 and Asp106 together coordinate Mg(2+). The active site involves Glu107.

This sequence belongs to the DNA polymerase type-Y family. Monomer. It depends on Mg(2+) as a cofactor.

The protein resides in the cytoplasm. The catalysed reaction is DNA(n) + a 2'-deoxyribonucleoside 5'-triphosphate = DNA(n+1) + diphosphate. Poorly processive, error-prone DNA polymerase involved in untargeted mutagenesis. Copies undamaged DNA at stalled replication forks, which arise in vivo from mismatched or misaligned primer ends. These misaligned primers can be extended by PolIV. Exhibits no 3'-5' exonuclease (proofreading) activity. May be involved in translesional synthesis, in conjunction with the beta clamp from PolIII. In Listeria monocytogenes serotype 4a (strain HCC23), this protein is DNA polymerase IV.